We begin with the raw amino-acid sequence, 321 residues long: Transcription factor MYB60 (321 aa).

HTH myb-type domains follow at residues 9-65 (KVGI…RPGI) and 66-116 (KRGN…KKKI). 2 DNA-binding regions (H-T-H motif) span residues 37–61 (WRSV…TNYL) and 89–112 (WAAI…NTHL). Residues Cys49 and Cys53 each carry the S-nitrosocysteine modification. Disordered regions lie at residues 196–215 (SPKA…EGSI) and 263–291 (HHQT…QKKH). Residues 206–215 (QNSSLEEGSI) are compositionally biased toward polar residues. The span at 273-290 (SDDHDHDHEMKMDHDQKK) shows a compositional bias: basic and acidic residues.

As to expression, restricted to stomatal guard cells. Mostly expressed in leaves, cotyledons, hypocotyls, seeds and ripened berry skins.

Its subcellular location is the nucleus. Transcription factor involved in the regulation of gene (e.g. drought-regulated and flavonoid biosynthetic genes) expression and stomatal movements leading to negative regulation of responses to drought and responses to other physiological stimuli (e.g. light). The polypeptide is Transcription factor MYB60 (Vitis vinifera (Grape)).